A 412-amino-acid polypeptide reads, in one-letter code: uncharacterized protein (412 aa).

A compositionally biased stretch (polar residues) spans 1-17 (MPSQGNNKNSENITQNP). Disordered regions lie at residues 1–20 (MPSQ…PIEG), 223–243 (EQAV…ARQT), and 310–412 (QKQM…NPVA). A compositionally biased stretch (polar residues) spans 340 to 355 (KLNSNTRGSSKRPSVN). Over residues 361-379 (GQRGRGGRGFYRGGRGRGG) the composition is skewed to gly residues. Positions 390–402 (SNSNNSTSQPSPN) are enriched in low complexity. The span at 403-412 (AELSNFNPVA) shows a compositional bias: polar residues.

This is an uncharacterized protein from Schizosaccharomyces pombe (strain 972 / ATCC 24843) (Fission yeast).